The primary structure comprises 127 residues: Major sperm protein isoform alpha (127 aa).

Position 2 is an N-acetylalanine (alanine 2). Residues 9–126 (DINTQPSQKI…RRKNLPIEYN (118 aa)) form the MSP domain.

As to quaternary structure, forms filaments 10 nm wide, with a characteristic substructure repeating axially at 9 nm. In terms of tissue distribution, sperm.

Its subcellular location is the cell projection. It is found in the pseudopodium. It localises to the cytoplasm. The protein resides in the cytoskeleton. Central component in molecular interactions underlying sperm crawling. Forms an extensive filament system that extends from sperm villipoda, along the leading edge of the pseudopod. The sequence is that of Major sperm protein isoform alpha from Ascaris suum (Pig roundworm).